Here is a 907-residue protein sequence, read N- to C-terminus: Protein translocase subunit SecA (907 aa).

ATP is bound by residues Q87, 105 to 109, and D512; that span reads GEGKT. Residues 869–897 are disordered; that stretch reads AESLSAHTPVVREGEKVGRNDPCPCGSGR. Residues 878–887 show a composition bias toward basic and acidic residues; the sequence is VVREGEKVGR. Residues C891, C893, C902, and H903 each contribute to the Zn(2+) site.

Belongs to the SecA family. As to quaternary structure, monomer and homodimer. Part of the essential Sec protein translocation apparatus which comprises SecA, SecYEG and auxiliary proteins SecDF-YajC and YidC. Zn(2+) serves as cofactor.

The protein resides in the cell inner membrane. The protein localises to the cytoplasm. It carries out the reaction ATP + H2O + cellular proteinSide 1 = ADP + phosphate + cellular proteinSide 2.. Part of the Sec protein translocase complex. Interacts with the SecYEG preprotein conducting channel. Has a central role in coupling the hydrolysis of ATP to the transfer of proteins into and across the cell membrane, serving both as a receptor for the preprotein-SecB complex and as an ATP-driven molecular motor driving the stepwise translocation of polypeptide chains across the membrane. This chain is Protein translocase subunit SecA, found in Shewanella sediminis (strain HAW-EB3).